The following is a 46-amino-acid chain: Protein YpdJ (46 aa).

Its function is as follows. May be involved in H(2) production during fermentative growth. The chain is Protein YpdJ (ypdJ) from Escherichia coli (strain K12).